The primary structure comprises 617 residues: Pyrophosphate--fructose 6-phosphate 1-phosphotransferase subunit alpha 2 (617 aa).

Belongs to the phosphofructokinase type A (PFKA) family. PPi-dependent PFK group II subfamily. Clade 'Long' sub-subfamily. Tetramer of two alpha (regulatory) and two beta (catalytic) chains. Expressed in roots and specific parts such as the trichomes of leaves, cotyledon veins, as well as in stamen and gynoecium of flowers.

The protein resides in the cytoplasm. Its pathway is carbohydrate degradation; glycolysis; D-glyceraldehyde 3-phosphate and glycerone phosphate from D-glucose: step 3/4. Its activity is regulated as follows. Allosterically activated by fructose 2,6-bisphosphate. Functionally, regulatory subunit of pyrophosphate--fructose 6-phosphate 1-phosphotransferase. In Arabidopsis thaliana (Mouse-ear cress), this protein is Pyrophosphate--fructose 6-phosphate 1-phosphotransferase subunit alpha 2.